We begin with the raw amino-acid sequence, 129 residues long: 8-oxo-dGTP diphosphatase (129 aa).

Positions 1–129 constitute a Nudix hydrolase domain; sequence MKKLQIAVGI…EPVIAKLKRL (129 aa). 8-oxo-dGTP-binding positions include Arg23, His28, and 34–37; that span reads EFPG. The Mg(2+) site is built by Gly37 and Glu57. The Nudix box motif lies at 38 to 59; it reads GKIEMGETPEQAVVRELQEEVG. Asn119 is a binding site for 8-oxo-dGTP.

It belongs to the Nudix hydrolase family. As to quaternary structure, monomer. The cofactor is Mg(2+).

It carries out the reaction 8-oxo-dGTP + H2O = 8-oxo-dGMP + diphosphate + H(+). The enzyme catalyses 8-oxo-GTP + H2O = 8-oxo-GMP + diphosphate + H(+). It catalyses the reaction 8-oxo-dGDP + H2O = 8-oxo-dGMP + phosphate + H(+). The catalysed reaction is 8-oxo-GDP + H2O = 8-oxo-GMP + phosphate + H(+). Its function is as follows. Specifically hydrolyzes both 8-oxo-deoxyguanosine triphosphate (8-oxo-dGTP) and 8-oxo-guanosine triphosphate (8-oxo-GTP) to the related monophosphates, thereby cleaning up the nucleotide pools and preventing misincorporation of 8-oxoGua into DNA and RNA. It prevents replicational errors by removing an oxidatively damaged form of guanine (8-oxo-dGTP) from DNA and the nucleotide pool. 8-oxo-dGTP can be inserted opposite dA and dC residues of template DNA with almost equal efficiency thus leading to A.T to G.C transversions. MutT may also ensure transcriptional fidelity, removing 8-oxo-GTP from the ribonucleotide triphosphate pool. However, due to the lower efficiency of RNA polymerase 8-oxo-GTP incorporation, MutT is probably not a major contributor to transcriptional fidelity. It also hydrolyzes 8-oxo-dGDP and 8-oxo-GDP to their monophosphate form. In vitro, can also use dGTP, dGDP and other various nucleoside di- and triphosphates, with much lower efficiency. Works cooperatively with MutM and MutY to prevent accumulation in the DNA of oxidized guanine residues. The protein is 8-oxo-dGTP diphosphatase of Escherichia coli (strain K12).